Reading from the N-terminus, the 635-residue chain is Cationic amino acid transporter 2, vacuolar (635 aa).

At M1 to H48 the chain is on the cytoplasmic side. The helical transmembrane segment at L49–V69 threads the bilayer. The Vacuolar portion of the chain corresponds to A70–P76. The chain crosses the membrane as a helical span at residues S77 to A97. Residues E98 to S108 are Cytoplasmic-facing. The chain crosses the membrane as a helical span at residues A109–L131. Residues E132–D171 lie on the Vacuolar side of the membrane. The helical transmembrane segment at I172–G192 threads the bilayer. The Cytoplasmic segment spans residues I193 to Q200. Residues G201–L221 traverse the membrane as a helical segment. Topologically, residues G222–G235 are vacuolar. A helical membrane pass occupies residues F236 to I256. Over G257–G280 the chain is Cytoplasmic. Residues L281–I301 form a helical membrane-spanning segment. At P302 to A324 the chain is on the vacuolar side. The chain crosses the membrane as a helical span at residues V325–L345. The Cytoplasmic portion of the chain corresponds to P346–K376. The helical transmembrane segment at A377–L397 threads the bilayer. A topological domain (vacuolar) is located at residue A398. A helical membrane pass occupies residues G399 to L419. Over R420–R493 the chain is Cytoplasmic. Residues I494–A514 traverse the membrane as a helical segment. Topologically, residues S515–R524 are vacuolar. The helical transmembrane segment at Y525 to I545 threads the bilayer. Over D546–Y560 the chain is Cytoplasmic. Residues M561 to V581 traverse the membrane as a helical segment. Topologically, residues N582–S585 are vacuolar. The helical transmembrane segment at A586–G606 threads the bilayer. The Cytoplasmic segment spans residues R607–A635.

Belongs to the amino acid-polyamine-organocation (APC) superfamily. Cationic amino acid transporter (CAT) (TC 2.A.3.3) family. In terms of tissue distribution, expressed in roots, stems, flowers, leaves, and siliques.

It localises to the vacuole membrane. In terms of biological role, permease involved in the transport of the cationic amino acids. The chain is Cationic amino acid transporter 2, vacuolar (CAT2) from Arabidopsis thaliana (Mouse-ear cress).